Consider the following 361-residue polypeptide: Probable cysteine protease RD19B (361 aa).

Positions 1–24 (MDYHLRVLFSVSLIFVFVSVSVCG) are cleaved as a signal peptide. A propeptide spans 25–131 (DEDVLIRQVV…NQAPILPTQN (107 aa)) (activation peptide). 2 disulfides stabilise this stretch: Cys-153–Cys-203 and Cys-187–Cys-237. Residue Cys-156 is part of the active site. N-linked (GlcNAc...) asparagine glycosylation occurs at Asn-250. A disulfide bond links Cys-293 and Cys-347. Residues His-299 and Asn-326 contribute to the active site.

It belongs to the peptidase C1 family.

The protein resides in the lytic vacuole. Probable thiol protease. This Arabidopsis thaliana (Mouse-ear cress) protein is Probable cysteine protease RD19B.